The sequence spans 130 residues: MDMRAPAQIFGFLLLLFQGTRCDIQMTQSPSSLSASLGERVSLTCRASQDIGSSLNWLQQEPDGTIKRLIYATSSLDSGVPKRFSGSRSGSDYSLTISSLESEDFVDYYCLQYASSPWTFGGGTKLEIKR.

Residues 1-22 (MDMRAPAQIFGFLLLLFQGTRC) form the signal peptide. Residues 23–45 (DIQMTQSPSSLSASLGERVSLTC) form a framework-1 region. An intrachain disulfide couples C45 to C110. The segment at 46 to 56 (RASQDIGSSLN) is complementarity-determining-1. The tract at residues 57-71 (WLQQEPDGTIKRLIY) is framework-2. A complementarity-determining-2 region spans residues 72–78 (ATSSLDS). The framework-3 stretch occupies residues 79-110 (GVPKRFSGSRSGSDYSLTISSLESEDFVDYYC). The segment at 111–119 (LQYASSPWT) is complementarity-determining-3. The segment at 120-129 (FGGGTKLEIK) is framework-4.

This is Immunoglobulin kappa chain variable 9-120 from Mus musculus (Mouse).